A 318-amino-acid chain; its full sequence is ATP synthase gamma chain (318 aa).

Belongs to the ATPase gamma chain family. F-type ATPases have 2 components, CF(1) - the catalytic core - and CF(0) - the membrane proton channel. CF(1) has five subunits: alpha(3), beta(3), gamma(1), delta(1), epsilon(1). CF(0) has three main subunits: a, b and c.

It localises to the cell membrane. Its function is as follows. Produces ATP from ADP in the presence of a proton gradient across the membrane. The gamma chain is believed to be important in regulating ATPase activity and the flow of protons through the CF(0) complex. The chain is ATP synthase gamma chain from Lactobacillus gasseri (strain ATCC 33323 / DSM 20243 / BCRC 14619 / CIP 102991 / JCM 1131 / KCTC 3163 / NCIMB 11718 / NCTC 13722 / AM63).